A 184-amino-acid chain; its full sequence is Adenine phosphoribosyltransferase (184 aa).

This sequence belongs to the purine/pyrimidine phosphoribosyltransferase family. In terms of assembly, homodimer.

It is found in the cytoplasm. It carries out the reaction AMP + diphosphate = 5-phospho-alpha-D-ribose 1-diphosphate + adenine. It functions in the pathway purine metabolism; AMP biosynthesis via salvage pathway; AMP from adenine: step 1/1. In terms of biological role, catalyzes a salvage reaction resulting in the formation of AMP, that is energically less costly than de novo synthesis. The protein is Adenine phosphoribosyltransferase of Shewanella baltica (strain OS223).